The chain runs to 120 residues: Chaperonin GroEL (120 aa).

23-27 (DGTTT) contacts ATP.

The protein belongs to the chaperonin (HSP60) family. In terms of assembly, forms a cylinder of 14 subunits composed of two heptameric rings stacked back-to-back. Interacts with the co-chaperonin GroES.

The protein resides in the cytoplasm. It catalyses the reaction ATP + H2O + a folded polypeptide = ADP + phosphate + an unfolded polypeptide.. Its function is as follows. Together with its co-chaperonin GroES, plays an essential role in assisting protein folding. The GroEL-GroES system forms a nano-cage that allows encapsulation of the non-native substrate proteins and provides a physical environment optimized to promote and accelerate protein folding. This chain is Chaperonin GroEL, found in Mycolicibacterium rhodesiae (Mycobacterium rhodesiae).